The primary structure comprises 764 residues: Metabotropic glutamate receptor-like protein H (764 aa).

The first 20 residues, 1 to 20 (MKNILKILILILICINKINC), serve as a signal peptide directing secretion. Residues 21–393 (LDGDGKQFRM…EVEFSQSIQN (373 aa)) are Extracellular-facing. Residues Asn72, Asn260, Asn278, Asn344, and Asn379 are each glycosylated (N-linked (GlcNAc...) asparagine). Residues 394-414 (GFSITTGILIGITILMMIGII) form a helical membrane-spanning segment. The Cytoplasmic segment spans residues 415 to 427 (KYSKTPSMRSASP). The chain crosses the membrane as a helical span at residues 428-448 (IFLNFILAGGIIVYIGIIVWV). The Extracellular portion of the chain corresponds to 449–464 (GPMSTHSCNARLWLVT). The chain crosses the membrane as a helical span at residues 465 to 485 (LGFSTLIGSLVVKNFRIWLIF). Residues 486–500 (DNPELKSIKITNYQL) are Cytoplasmic-facing. The chain crosses the membrane as a helical span at residues 501–521 (FPWVGACLVINIILMAILTSV). The Extracellular segment spans residues 522 to 552 (GDLKQIDAMNIDSLGKYEYMKVCKMNSSGAS). An N-linked (GlcNAc...) asparagine glycan is attached at Asn547. The chain crosses the membrane as a helical span at residues 553 to 573 (TLYTILAYFAALLLVGVFVSW). Residues 574 to 587 (KIRIVDILEFNESG) lie on the Cytoplasmic side of the membrane. The chain crosses the membrane as a helical span at residues 588–608 (AIANTLYAISFCLFVIVPLMI). Residues 609 to 617 (SPQDMQSET) lie on the Extracellular side of the membrane. The helical transmembrane segment at 618-638 (IILCTTGLFITTAALLIIFIP) threads the bilayer. Over 639-764 (KFWRVFRKGA…IIVNDSENNN (126 aa)) the chain is Cytoplasmic. Residues 664 to 764 (ATARAESGSK…IIVNDSENNN (101 aa)) are disordered. Residues 671 to 690 (GSKGSNGNASSGNRTNRRGN) show a composition bias toward low complexity. Residues 707–719 (ENQKEKEKIKDDV) are compositionally biased toward basic and acidic residues. The span at 731-748 (FTDEASDTDNNEFNDIEL) shows a compositional bias: acidic residues.

The protein in the N-terminal section; belongs to the BMP lipoprotein family. This sequence in the C-terminal section; belongs to the G-protein coupled receptor 3 family. GABA-B receptor subfamily.

Its subcellular location is the membrane. This is Metabotropic glutamate receptor-like protein H (grlH) from Dictyostelium discoideum (Social amoeba).